Reading from the N-terminus, the 41-residue chain is Large ribosomal subunit protein bL36 (41 aa).

The protein belongs to the bacterial ribosomal protein bL36 family.

This is Large ribosomal subunit protein bL36 from Orientia tsutsugamushi (strain Boryong) (Rickettsia tsutsugamushi).